Reading from the N-terminus, the 953-residue chain is MSKKRLHEIAKEIGKSSKEVVEHAKYLGLDVKSHASSVEEADAKKIISSFSKASKPDVTASQTVKPKEVAQPSVTVVKETGSEHVEKTQVSKPKSRNFKAEREARAKEQAARKQANGSSHRSQERRGGYRQPNNHQTNEQGDKRITHRSQGDTNDKRIDRKASNVSPRHDNHQLVGDRNRSFAKENHKNGRFTNQKKQGRQEPQSKSPKIDFKARAAALKAEQNAEYSRQSETRFRAQQEAKRLAELARQEAKEAALKAQAEEMSHREAALKSIEEAETKLKSSNISAKSTADNRRKKQARPEKNRELTHHSQEGQKKNKKSWNSQNQVRNQKNSNWNKNKKTKKGKNVKNTNTAPKPVTERKFHELPKEFEYTEGMTVAEIAKRIKREPAEIVKKLFMMGVMATQNQSLDGDTIELLMVDYGIEAKAKVEVDDADIERFFEDENYLNPENIVERAPVVTIMGHVDHGKTTLLDTLRNSRVATGEAGGITQHIGAYQIEEAGKKITFLDTPGHAAFTSMRARGASVTDITILIVAADDGVMPQTIEAINHSKAAGVPIIVAINKIDKPGANPERVIAELAEYGIISTAWGGECEFVEISAKFNKNIDELLETVLLVAEVEELKADPTVRAIGTVIEARLDKGKGAIATLLVQQGTLHVQDPIVVGNTFGRVRAMVNDLGRRVKSAEPSTPVSITGLNETPMAGDHFAVYADEKAARAAGEERSKRALLKQRQNTQRVSLDNLFDTLKAGEIKTVNVIIKADVQGSVEALAASLVKIEVEGVRVNVVHSAVGAINESDVTLAEASNAVIIGFNVRPTPQARQQADTDDVEIRLHSIIYKVIEEVEEAMKGKLDPVYQEKVLGEAIIRETFKVSKVGTIGGFMVINGKVTRDSSVRVIRDSVVIFDGKLASLKHYKDDVKEVGNAQEGGLMIENFNDLKVDDTIEAYIMEEIVRK.

Disordered stretches follow at residues 52–241 (KASK…QQEA) and 279–363 (TKLK…TERK). Composition is skewed to basic and acidic residues over residues 80–89 (TGSEHVEKTQ), 98–111 (FKAE…EQAA), and 140–188 (QGDK…ENHK). The span at 191 to 207 (RFTNQKKQGRQEPQSKS) shows a compositional bias: polar residues. Residues 229–241 (RQSETRFRAQQEA) show a composition bias toward basic and acidic residues. Polar residues predominate over residues 282–291 (KSSNISAKST). Over residues 300 to 317 (ARPEKNRELTHHSQEGQK) the composition is skewed to basic and acidic residues. Over residues 322-338 (SWNSQNQVRNQKNSNWN) the composition is skewed to low complexity. A compositionally biased stretch (basic residues) spans 339–348 (KNKKTKKGKN). A tr-type G domain is found at 454–623 (ERAPVVTIMG…LLVAEVEELK (170 aa)). The G1 stretch occupies residues 463 to 470 (GHVDHGKT). 463–470 (GHVDHGKT) lines the GTP pocket. The interval 488–492 (GITQH) is G2. Residues 509–512 (DTPG) form a G3 region. GTP contacts are provided by residues 509–513 (DTPGH) and 563–566 (NKID). Residues 563–566 (NKID) form a G4 region. Positions 599–601 (SAK) are G5.

It belongs to the TRAFAC class translation factor GTPase superfamily. Classic translation factor GTPase family. IF-2 subfamily.

Its subcellular location is the cytoplasm. Functionally, one of the essential components for the initiation of protein synthesis. Protects formylmethionyl-tRNA from spontaneous hydrolysis and promotes its binding to the 30S ribosomal subunits. Also involved in the hydrolysis of GTP during the formation of the 70S ribosomal complex. This chain is Translation initiation factor IF-2, found in Streptococcus pyogenes serotype M4 (strain MGAS10750).